Reading from the N-terminus, the 333-residue chain is Holliday junction branch migration complex subunit RuvB (333 aa).

The large ATPase domain (RuvB-L) stretch occupies residues 1–181; that stretch reads MARILDNDLL…FGINGHMEYY (181 aa). ATP contacts are provided by residues Leu-20, Arg-21, Gly-62, Lys-65, Thr-66, Thr-67, 128-130, Arg-171, Tyr-181, and Arg-218; that span reads EDY. Position 66 (Thr-66) interacts with Mg(2+). Residues 130-148 are presensor-1 beta-hairpin; the sequence is YYIDIMIGAGETSRSVHLD. The interval 182–252 is small ATPAse domain (RuvB-S); sequence ELPDLTEIVE…IADQALTMLD (71 aa). Positions 255 to 333 are head domain (RuvB-H); that stretch reads HEGLDYVDQK…HMGYDYTRDN (79 aa). DNA contacts are provided by Arg-291, Arg-310, Arg-312, and Arg-315.

This sequence belongs to the RuvB family. Homohexamer. Forms an RuvA(8)-RuvB(12)-Holliday junction (HJ) complex. HJ DNA is sandwiched between 2 RuvA tetramers; dsDNA enters through RuvA and exits via RuvB. Only 4 subunits contact one DNA strand at any time. Two adjacent subunits are contacted by domain III of RuvA. An RuvB hexamer assembles on each DNA strand where it exits the tetramer. Each RuvB hexamer is contacted by two RuvA subunits (via domain III) on 2 adjacent RuvB subunits; this complex drives branch migration. In the full resolvosome a probable DNA-RuvA(4)-RuvB(12)-RuvC(2) complex forms which resolves the HJ.

It localises to the cytoplasm. It catalyses the reaction ATP + H2O = ADP + phosphate + H(+). Its activity is regulated as follows. Binding of domain III of RuvA to a single subunit of the RuvB hexamer activates the ATPase 2 subunits away and nucleotide exchange in the adjacent subunit. Its function is as follows. The RuvA-RuvB-RuvC complex processes Holliday junction (HJ) DNA during genetic recombination and DNA repair, while the RuvA-RuvB complex plays an important role in the rescue of blocked DNA replication forks via replication fork reversal (RFR). Catalyzes branch migration on Holliday junction (HJ) DNA in complex with RuvA from S.typhimurim and ATP. RuvA specifically binds to HJ cruciform DNA, conferring on it an open structure. The RuvB hexamer acts as an ATP-dependent pump, pulling dsDNA into and through the RuvAB complex. Forms 2 homohexamers on either side of HJ DNA bound by 1 or 2 RuvA tetramers; 4 subunits per hexamer contact DNA at a time. Coordinated motions by a converter formed by DNA-disengaged RuvB subunits stimulates ATP hydrolysis and nucleotide exchange. Immobilization of the converter enables RuvB to convert the ATP-contained energy into a lever motion, pulling 2 nucleotides of DNA out of the RuvA tetramer per ATP hydrolyzed, thus driving DNA branch migration. The RuvB motors rotate together with the DNA substrate, which together with the progressing nucleotide cycle forms the mechanistic basis for DNA recombination by continuous branch migration. Branch migration allows RuvC to scan DNA until it finds its consensus sequence, where it cleaves and resolves cruciform DNA. The sequence is that of Holliday junction branch migration complex subunit RuvB from Streptococcus thermophilus (strain ATCC BAA-250 / LMG 18311).